A 383-amino-acid polypeptide reads, in one-letter code: Lipid-A-disaccharide synthase (383 aa).

Belongs to the LpxB family.

It catalyses the reaction a lipid X + a UDP-2-N,3-O-bis[(3R)-3-hydroxyacyl]-alpha-D-glucosamine = a lipid A disaccharide + UDP + H(+). It functions in the pathway bacterial outer membrane biogenesis; LPS lipid A biosynthesis. Functionally, condensation of UDP-2,3-diacylglucosamine and 2,3-diacylglucosamine-1-phosphate to form lipid A disaccharide, a precursor of lipid A, a phosphorylated glycolipid that anchors the lipopolysaccharide to the outer membrane of the cell. The protein is Lipid-A-disaccharide synthase of Syntrophus aciditrophicus (strain SB).